A 95-amino-acid chain; its full sequence is MRNKKAPQTVSARHDAREHLSIEAYHKLNRASAVSRFVGGDLIHRELSGLHQLYIPHIFSYLNEDIDFVLNELKAKGLCRDFLAQQKDRGDRTHV.

Its function is as follows. Required for derepression (induction) of the P2 prophage helper by P4. The chain is Derepression protein (Epsilon) from Enterobacteria phage P4 (Bacteriophage P4).